The primary structure comprises 275 residues: NADPH-dependent 7-cyano-7-deazaguanine reductase (275 aa).

A substrate-binding site is contributed by 81-83 (IES). 83–84 (SK) contacts NADPH. The active-site Thioimide intermediate is C181. D188 serves as the catalytic Proton donor. 220 to 221 (HE) provides a ligand contact to substrate. 249 to 250 (RG) contacts NADPH.

Belongs to the GTP cyclohydrolase I family. QueF type 2 subfamily. In terms of assembly, homodimer.

The protein localises to the cytoplasm. The enzyme catalyses 7-aminomethyl-7-carbaguanine + 2 NADP(+) = 7-cyano-7-deazaguanine + 2 NADPH + 3 H(+). It functions in the pathway tRNA modification; tRNA-queuosine biosynthesis. In terms of biological role, catalyzes the NADPH-dependent reduction of 7-cyano-7-deazaguanine (preQ0) to 7-aminomethyl-7-deazaguanine (preQ1). The chain is NADPH-dependent 7-cyano-7-deazaguanine reductase from Xylella fastidiosa (strain 9a5c).